A 429-amino-acid chain; its full sequence is Threonine synthase (429 aa).

Residue Lys108 is modified to N6-(pyridoxal phosphate)lysine.

This sequence belongs to the threonine synthase family. Pyridoxal 5'-phosphate is required as a cofactor.

It catalyses the reaction O-phospho-L-homoserine + H2O = L-threonine + phosphate. It functions in the pathway amino-acid biosynthesis; L-threonine biosynthesis; L-threonine from L-aspartate: step 5/5. Its function is as follows. Catalyzes the gamma-elimination of phosphate from L-phosphohomoserine and the beta-addition of water to produce L-threonine. The sequence is that of Threonine synthase (thrC) from Buchnera aphidicola subsp. Schizaphis graminum (strain Sg).